The following is a 120-amino-acid chain: Small ribosomal subunit protein bS16 (120 aa).

The disordered stretch occupies residues 80-120 (GLKKRPARNNPHKGEPGKKAQERIAAAKQAAEDAKAAEASA). Over residues 81–90 (LKKRPARNNP) the composition is skewed to basic residues. Composition is skewed to basic and acidic residues over residues 91–101 (HKGEPGKKAQE) and 109–120 (AAEDAKAAEASA).

This sequence belongs to the bacterial ribosomal protein bS16 family.

The polypeptide is Small ribosomal subunit protein bS16 (Bartonella bacilliformis (strain ATCC 35685 / KC583 / Herrer 020/F12,63)).